Here is a 346-residue protein sequence, read N- to C-terminus: ATP-dependent (S)-NAD(P)H-hydrate dehydratase 2 (346 aa).

Residues 1-20 form a disordered region; it reads MMVHSPLATGPHPTTHLEPT. One can recognise a YjeF C-terminal domain in the interval 28 to 339; the sequence is LLRKAFQMIP…GYIGEAFEQV (312 aa). (6S)-NADPHX is bound by residues Gly-135 and 188–194; that span reads NHVEFQR. ATP contacts are provided by residues 228 to 232 and 248 to 257; these read KGSID and GSPKRCGGQG. Asp-258 serves as a coordination point for (6S)-NADPHX.

The protein belongs to the NnrD/CARKD family. Mg(2+) is required as a cofactor.

The protein localises to the cytoplasm. The enzyme catalyses (6S)-NADHX + ATP = ADP + phosphate + NADH + H(+). It catalyses the reaction (6S)-NADPHX + ATP = ADP + phosphate + NADPH + H(+). Its function is as follows. Catalyzes the dehydration of the S-form of NAD(P)HX at the expense of ATP, which is converted to ADP. Together with NAD(P)HX epimerase, which catalyzes the epimerization of the S- and R-forms, the enzyme allows the repair of both epimers of NAD(P)HX, a damaged form of NAD(P)H that is a result of enzymatic or heat-dependent hydration. The polypeptide is ATP-dependent (S)-NAD(P)H-hydrate dehydratase 2 (Puccinia graminis f. sp. tritici (strain CRL 75-36-700-3 / race SCCL) (Black stem rust fungus)).